Here is a 492-residue protein sequence, read N- to C-terminus: Heat shock factor protein 4 (492 aa).

Residues 17–122 (VPAFLGKLWA…LLERVRRKVP (106 aa)) mediate DNA binding. The hydrophobic repeat HR-A/B stretch occupies residues 129 to 203 (SRWRPEDLSR…GPLQTGPSST (75 aa)). An interactions with DUSP26, MAPK1 and MAPK2 region spans residues 245–322 (LPETTLGLSP…ECDFCVTAPP (78 aa)). The tract at residues 263–282 (SDIPEDSPSPEGHRLSPSGG) is disordered. A Glycyl lysine isopeptide (Lys-Gly) (interchain with G-Cter in SUMO) cross-link involves residue Lys-293. Position 298 is a phosphoserine (Ser-298). The disordered stretch occupies residues 337–378 (GSYSPEGPRSVQQPEPRGPREVPDRGTLGLDRGNRSPESLLP). The hydrophobic repeat HR-C stretch occupies residues 364–389 (LGLDRGNRSPESLLPPMLLRPAPETL).

Belongs to the HSF family. As to quaternary structure, homotrimer. Exhibits constitutive DNA binding and forms trimers even in the absence of stress. Interacts with ALKBH4, DUSP26, MAPK1, MAPK2, MAPK8 and MAP kinase p38. Phosphorylated mainly on serine residues. Phosphorylation on Ser-298 promotes sumoylation on Lys-293. In terms of processing, isoform HSF4B is constitutively sumoylated. Sumoylation represses the transcriptional activity and is promoted by phosphorylation on Ser-298. HSFA is not sumoylated. In terms of tissue distribution, preferentially expressed in brain and lung. Also found in the eye. Slightly detected in liver and skeletal muscle. Isoform B is the major species in various tissues.

The protein resides in the nucleus. Functionally, heat-shock transcription factor that specifically binds heat shock promoter elements (HSE). Required for denucleation and organelle rupture and degradation that occur during eye lens terminal differentiation, when fiber cells that compose the lens degrade all membrane-bound organelles in order to provide lens with transparency to allow the passage of light. In this process, may regulate denucleation of lens fiber cells in part by activating DNASE2B transcription. May be involved in DNA repair through the transcriptional regulation of RAD51. May up-regulate p53/TP53 protein in eye lens fiber cells, possibly through protein stabilization. In the eye lens, controls the expression of alpha-crystallin B chain/CRYAB and consequently may be involved in the regulation of lysosomal acidification. Its function is as follows. Transcriptional repressor. Transcriptional activator. The chain is Heat shock factor protein 4 (Hsf4) from Mus musculus (Mouse).